Consider the following 191-residue polypeptide: Protein Ves (191 aa).

It belongs to the Ves family.

This chain is Protein Ves, found in Escherichia coli (strain ATCC 8739 / DSM 1576 / NBRC 3972 / NCIMB 8545 / WDCM 00012 / Crooks).